The sequence spans 190 residues: MAQNGSESGSTLGGVAGRYASALFELARDERAVDAVTEGLDRFDALLRESADLQRLVRSPVFSTEEQVKAVEAVLARAGITGLAANFIRLAAANRRLFVLPDMIRAYRVLVREAKGIVRAEVRLAEPPSDAVLEEIKASLRDVARAEVELDLRVDPSLIGGIVVKLGSRMVDASLRTRLNSIRLAMRDAR.

This sequence belongs to the ATPase delta chain family. F-type ATPases have 2 components, F(1) - the catalytic core - and F(0) - the membrane proton channel. F(1) has five subunits: alpha(3), beta(3), gamma(1), delta(1), epsilon(1). F(0) has three main subunits: a(1), b(2) and c(10-14). The alpha and beta chains form an alternating ring which encloses part of the gamma chain. F(1) is attached to F(0) by a central stalk formed by the gamma and epsilon chains, while a peripheral stalk is formed by the delta and b chains.

Its subcellular location is the cell inner membrane. Its function is as follows. F(1)F(0) ATP synthase produces ATP from ADP in the presence of a proton or sodium gradient. F-type ATPases consist of two structural domains, F(1) containing the extramembraneous catalytic core and F(0) containing the membrane proton channel, linked together by a central stalk and a peripheral stalk. During catalysis, ATP synthesis in the catalytic domain of F(1) is coupled via a rotary mechanism of the central stalk subunits to proton translocation. In terms of biological role, this protein is part of the stalk that links CF(0) to CF(1). It either transmits conformational changes from CF(0) to CF(1) or is implicated in proton conduction. The sequence is that of ATP synthase subunit delta from Methylobacterium sp. (strain 4-46).